The chain runs to 498 residues: Peptidase inhibitor 16 (498 aa).

The first 29 residues, 1–29 (MHGSCSPWVMLPPPLLLLLLLIATGPTTA), serve as a signal peptide directing secretion. The region spanning 39–167 (VDLHNQYRAQ…ANIHLLVCNY (129 aa)) is the SCP domain. A glycan (N-linked (GlcNAc...) asparagine) is linked at asparagine 116. 3 disordered regions span residues 204–277 (NPEK…GPSS), 317–407 (PKSM…SPLS), and 419–467 (ERGG…ENPE). Polar residues-rich tracts occupy residues 218 to 277 (VPST…GPSS) and 344 to 353 (LTESGESVPQ). Positions 367–380 (PEAILPEAEAAPTE) are enriched in low complexity. The segment covering 383-397 (VELREPEAESPKAES) has biased composition (basic and acidic residues). Residues 437–447 (SLPTFPSASGN) are compositionally biased toward polar residues. N-linked (GlcNAc...) asparagine glycosylation occurs at asparagine 447.

Belongs to the CRISP family. As to quaternary structure, interacts with PSP94/MSMB. In terms of processing, N-glycosylated. In terms of tissue distribution, expressed strongly in aorta and skin, and weakly in adipose tissue (at protein level). In heart, found in the extracellular space surrounding cardiomyocytes (at protein level).

Its subcellular location is the secreted. May inhibit cardiomyocyte growth. The protein is Peptidase inhibitor 16 (Pi16) of Mus musculus (Mouse).